Here is a 244-residue protein sequence, read N- to C-terminus: Leucyl/phenylalanyl-tRNA--protein transferase (244 aa).

The protein belongs to the L/F-transferase family.

It localises to the cytoplasm. The catalysed reaction is N-terminal L-lysyl-[protein] + L-leucyl-tRNA(Leu) = N-terminal L-leucyl-L-lysyl-[protein] + tRNA(Leu) + H(+). It carries out the reaction N-terminal L-arginyl-[protein] + L-leucyl-tRNA(Leu) = N-terminal L-leucyl-L-arginyl-[protein] + tRNA(Leu) + H(+). It catalyses the reaction L-phenylalanyl-tRNA(Phe) + an N-terminal L-alpha-aminoacyl-[protein] = an N-terminal L-phenylalanyl-L-alpha-aminoacyl-[protein] + tRNA(Phe). Its function is as follows. Functions in the N-end rule pathway of protein degradation where it conjugates Leu, Phe and, less efficiently, Met from aminoacyl-tRNAs to the N-termini of proteins containing an N-terminal arginine or lysine. The sequence is that of Leucyl/phenylalanyl-tRNA--protein transferase from Janthinobacterium sp. (strain Marseille) (Minibacterium massiliensis).